Here is a 1187-residue protein sequence, read N- to C-terminus: Disease resistance protein TAO1 (1187 aa).

The region spanning 38-202 (WLHPVFLSFR…KISKDVSDVL (165 aa)) is the TIR domain. E113 is a catalytic residue. The region spanning 217 to 478 (EAHTTEITSL…FFRRERIETL (262 aa)) is the NB-ARC domain. 14 LRR repeats span residues 498 to 522 (DKSL…GLDI), 611 to 633 (SRKL…KFNP), 635 to 658 (FLVK…PIRN), 660 to 679 (KWMD…FSTA), 680 to 703 (TNLQ…IGNA), 704 to 727 (TNLL…IGNL), 728 to 750 (TNLK…SFGN), 752 to 775 (TSLK…IGNI), 799 to 823 (NTNL…MLNL), 824 to 849 (TRLE…VINL), 870 to 894 (ATNL…IWNI), 895 to 918 (TNLQ…VENA), 920 to 942 (NLQS…IWRI), and 953 to 974 (CSSL…LILD).

It catalyses the reaction NAD(+) + H2O = ADP-D-ribose + nicotinamide + H(+). Functionally, TIR-NB-LRR receptor-like protein that contributes to disease resistance induced by the Pseudomonas syringae type III effector AvrB. Acts additively with RPM1 to generate a full disease resistance response to P.syringae expressing this type III effector. The sequence is that of Disease resistance protein TAO1 from Arabidopsis thaliana (Mouse-ear cress).